Consider the following 298-residue polypeptide: Peroxisomal 2,4-dienoyl-CoA reductase [(3E)-enoyl-CoA-producing] (298 aa).

G19–I24 contributes to the NADP(+) binding site. R44 serves as a coordination point for substrate. D69 provides a ligand contact to NADP(+). Residues R71, F101, and S109–N111 each bind substrate. Residues K173 and P200–T206 contribute to the NADP(+) site. The tract at residues S279–L298 is disordered. The Microbody targeting signal signature appears at S296 to L298.

Belongs to the short-chain dehydrogenases/reductases (SDR) family. 2,4-dienoyl-CoA reductase subfamily.

Its subcellular location is the peroxisome. The enzyme catalyses a (2E,4Z)-dienoyl-CoA + NADPH + H(+) = a 4,5-saturated-(3E)-enoyl-CoA + NADP(+). It carries out the reaction a (2E,4E)-dienoyl-CoA + NADPH + H(+) = a 4,5-saturated-(3E)-enoyl-CoA + NADP(+). Functionally, auxiliary enzyme of beta-oxidation. Participates in the degradation of unsaturated fatty enoyl-CoA esters having double bonds in both even- and odd-numbered positions in peroxisome. Catalyzes the NADP-dependent reduction of 2,4-dienoyl-CoA to yield trans-3-enoyl-CoA. The polypeptide is Peroxisomal 2,4-dienoyl-CoA reductase [(3E)-enoyl-CoA-producing] (Arabidopsis thaliana (Mouse-ear cress)).